Consider the following 652-residue polypeptide: ATP-dependent zinc metalloprotease FtsH (652 aa).

Over 1-11 the chain is Cytoplasmic; it reads MKKQNNGLIKN. A helical membrane pass occupies residues 12–32; that stretch reads PFLWLLFIFFLVTGFQYFYSG. Topologically, residues 33–131 are extracellular; sequence NNSGGSQQIN…EVTVKHESSS (99 aa). A helical transmembrane segment spans residues 132-152; it reads GIWINLLVSIVPFGILFFFLF. At 153 to 652 the chain is on the cytoplasmic side; that stretch reads SMMGNMGGGN…EVKSKMNDEK (500 aa). Residue 227-234 participates in ATP binding; it reads GPPGTGKT. Histidine 449 lines the Zn(2+) pocket. Residue glutamate 450 is part of the active site. Zn(2+) is bound by residues histidine 453 and aspartate 525. The segment at 628 to 652 is disordered; the sequence is MPEAVEEESHALSYDEVKSKMNDEK. Basic and acidic residues predominate over residues 634–652; sequence EESHALSYDEVKSKMNDEK.

The protein in the central section; belongs to the AAA ATPase family. In the C-terminal section; belongs to the peptidase M41 family. Homohexamer. Requires Zn(2+) as cofactor.

It localises to the cell membrane. In terms of biological role, acts as a processive, ATP-dependent zinc metallopeptidase for both cytoplasmic and membrane proteins. Plays a role in the quality control of integral membrane proteins. The chain is ATP-dependent zinc metalloprotease FtsH from Streptococcus pneumoniae (strain ATCC BAA-255 / R6).